Reading from the N-terminus, the 246-residue chain is Exosome complex component Rrp41 (246 aa).

It belongs to the RNase PH family. Rrp41 subfamily. As to quaternary structure, component of the archaeal exosome complex. Forms a hexameric ring-like arrangement composed of 3 Rrp41-Rrp42 heterodimers. The hexameric ring associates with a trimer of Rrp4 and/or Csl4 subunits.

The protein localises to the cytoplasm. Functionally, catalytic component of the exosome, which is a complex involved in RNA degradation. Has 3'-&gt;5' exoribonuclease activity. Can also synthesize heteromeric RNA-tails. In Pyrobaculum arsenaticum (strain DSM 13514 / JCM 11321 / PZ6), this protein is Exosome complex component Rrp41.